The primary structure comprises 378 residues: Transaldolase 1 (378 aa).

Lys146 functions as the Schiff-base intermediate with substrate in the catalytic mechanism.

Belongs to the transaldolase family. Type 2 subfamily.

It localises to the cytoplasm. It carries out the reaction D-sedoheptulose 7-phosphate + D-glyceraldehyde 3-phosphate = D-erythrose 4-phosphate + beta-D-fructose 6-phosphate. Its pathway is carbohydrate degradation; pentose phosphate pathway; D-glyceraldehyde 3-phosphate and beta-D-fructose 6-phosphate from D-ribose 5-phosphate and D-xylulose 5-phosphate (non-oxidative stage): step 2/3. In terms of biological role, transaldolase is important for the balance of metabolites in the pentose-phosphate pathway. The sequence is that of Transaldolase 1 from Streptomyces avermitilis (strain ATCC 31267 / DSM 46492 / JCM 5070 / NBRC 14893 / NCIMB 12804 / NRRL 8165 / MA-4680).